The primary structure comprises 244 residues: Small ribosomal subunit protein uS3 (244 aa).

The region spanning 39-107 is the KH type-2 domain; it reads MRKFVMSELK…ETHLNIVEVR (69 aa). Positions 214 to 244 are disordered; it reads ASERRALEGDAQGPASRERDRGDRRRERDNA. Over residues 229–244 the composition is skewed to basic and acidic residues; sequence SRERDRGDRRRERDNA.

This sequence belongs to the universal ribosomal protein uS3 family. In terms of assembly, part of the 30S ribosomal subunit. Forms a tight complex with proteins S10 and S14.

In terms of biological role, binds the lower part of the 30S subunit head. Binds mRNA in the 70S ribosome, positioning it for translation. The polypeptide is Small ribosomal subunit protein uS3 (Rhizobium etli (strain CIAT 652)).